The following is a 640-amino-acid chain: Chaperone protein HtpG (640 aa).

Residues 1–348 are a; substrate-binding; sequence MADVAHQETH…SNDLPLNVSR (348 aa). The tract at residues 349–565 is b; it reads EILQDNKITQ…GTGMSTQMIK (217 aa). Residues 566 to 640 form a c region; it reads LMQAAGQPVP…LNTLLMNLAK (75 aa).

Belongs to the heat shock protein 90 family. As to quaternary structure, homodimer.

It is found in the cytoplasm. In terms of biological role, molecular chaperone. Has ATPase activity. The polypeptide is Chaperone protein HtpG (Pseudoalteromonas atlantica (strain T6c / ATCC BAA-1087)).